Reading from the N-terminus, the 179-residue chain is ATP synthase subunit b (179 aa).

A helical transmembrane segment spans residues 27–47 (TAITFLVMLAVLAKFAWGPIV).

Belongs to the ATPase B chain family. As to quaternary structure, F-type ATPases have 2 components, F(1) - the catalytic core - and F(0) - the membrane proton channel. F(1) has five subunits: alpha(3), beta(3), gamma(1), delta(1), epsilon(1). F(0) has three main subunits: a(1), b(2) and c(10-14). The alpha and beta chains form an alternating ring which encloses part of the gamma chain. F(1) is attached to F(0) by a central stalk formed by the gamma and epsilon chains, while a peripheral stalk is formed by the delta and b chains.

It localises to the cell inner membrane. F(1)F(0) ATP synthase produces ATP from ADP in the presence of a proton or sodium gradient. F-type ATPases consist of two structural domains, F(1) containing the extramembraneous catalytic core and F(0) containing the membrane proton channel, linked together by a central stalk and a peripheral stalk. During catalysis, ATP synthesis in the catalytic domain of F(1) is coupled via a rotary mechanism of the central stalk subunits to proton translocation. Its function is as follows. Component of the F(0) channel, it forms part of the peripheral stalk, linking F(1) to F(0). This chain is ATP synthase subunit b, found in Anaeromyxobacter dehalogenans (strain 2CP-C).